A 318-amino-acid chain; its full sequence is Methionyl-tRNA formyltransferase (318 aa).

112–115 (SLLP) contacts (6S)-5,6,7,8-tetrahydrofolate.

It belongs to the Fmt family.

It carries out the reaction L-methionyl-tRNA(fMet) + (6R)-10-formyltetrahydrofolate = N-formyl-L-methionyl-tRNA(fMet) + (6S)-5,6,7,8-tetrahydrofolate + H(+). Its function is as follows. Attaches a formyl group to the free amino group of methionyl-tRNA(fMet). The formyl group appears to play a dual role in the initiator identity of N-formylmethionyl-tRNA by promoting its recognition by IF2 and preventing the misappropriation of this tRNA by the elongation apparatus. The sequence is that of Methionyl-tRNA formyltransferase from Mycobacterium leprae (strain Br4923).